The primary structure comprises 351 residues: Protein RecA (351 aa).

Gly68 to Thr75 serves as a coordination point for ATP.

It belongs to the RecA family.

Its subcellular location is the cytoplasm. Its function is as follows. Can catalyze the hydrolysis of ATP in the presence of single-stranded DNA, the ATP-dependent uptake of single-stranded DNA by duplex DNA, and the ATP-dependent hybridization of homologous single-stranded DNAs. It interacts with LexA causing its activation and leading to its autocatalytic cleavage. The protein is Protein RecA of Thermotoga neapolitana (strain ATCC 49049 / DSM 4359 / NBRC 107923 / NS-E).